Reading from the N-terminus, the 341-residue chain is Guanine nucleotide-binding protein subunit beta (341 aa).

WD repeat units lie at residues 54 to 93 (GHLA…KVHA), 96 to 135 (LRSS…GNVR), 142 to 180 (GHTG…QTTA), 183 to 222 (GHTG…CKQT), 225 to 264 (GHES…EIGM), 269 to 308 (NIIC…RAGV), and 311 to 341 (GHDN…RIWN).

It belongs to the WD repeat G protein beta family. As to quaternary structure, g proteins are composed of 3 units, alpha, beta and gamma. The G protein beta1-gamma2 dimer interacts with calmodulin. Abundantly expressed in gills, gonad and mantle and at lower levels in digestion gland. Not detected in muscle.

It is found in the cytoplasm. Its function is as follows. Guanine nucleotide-binding proteins (G proteins) are involved as a modulator or transducer in various transmembrane signaling systems. The beta and gamma chains are required for the GTPase activity, for replacement of GDP by GTP, and for G protein-effector interaction. This is Guanine nucleotide-binding protein subunit beta from Pinctada fucata (Akoya pearl oyster).